Here is a 407-residue protein sequence, read N- to C-terminus: Dephospho-CoA kinase (407 aa).

The 199-residue stretch at 3–201 folds into the DPCK domain; it reads RIGLTGGIGA…ERIVPFAHNL (199 aa). Residue 11-16 participates in ATP binding; the sequence is GAGKSA. The tract at residues 196–407 is UPF0157; that stretch reads PFAHNLSTRQ…DWADSTGWKP (212 aa).

This sequence in the N-terminal section; belongs to the CoaE family. In the C-terminal section; belongs to the UPF0157 (GrpB) family.

It is found in the cytoplasm. It carries out the reaction 3'-dephospho-CoA + ATP = ADP + CoA + H(+). Its pathway is cofactor biosynthesis; coenzyme A biosynthesis; CoA from (R)-pantothenate: step 5/5. In terms of biological role, catalyzes the phosphorylation of the 3'-hydroxyl group of dephosphocoenzyme A to form coenzyme A. The protein is Dephospho-CoA kinase of Mycolicibacterium paratuberculosis (strain ATCC BAA-968 / K-10) (Mycobacterium paratuberculosis).